The sequence spans 1055 residues: Error-prone DNA polymerase (1055 aa).

It belongs to the DNA polymerase type-C family. DnaE2 subfamily.

Its subcellular location is the cytoplasm. It catalyses the reaction DNA(n) + a 2'-deoxyribonucleoside 5'-triphosphate = DNA(n+1) + diphosphate. Its function is as follows. DNA polymerase involved in damage-induced mutagenesis and translesion synthesis (TLS). It is not the major replicative DNA polymerase. The chain is Error-prone DNA polymerase from Corynebacterium glutamicum (strain ATCC 13032 / DSM 20300 / JCM 1318 / BCRC 11384 / CCUG 27702 / LMG 3730 / NBRC 12168 / NCIMB 10025 / NRRL B-2784 / 534).